Consider the following 233-residue polypeptide: Cytidylate kinase (233 aa).

Gly-15–Ser-23 contacts ATP.

Belongs to the cytidylate kinase family. Type 1 subfamily.

The protein resides in the cytoplasm. It carries out the reaction CMP + ATP = CDP + ADP. The catalysed reaction is dCMP + ATP = dCDP + ADP. The protein is Cytidylate kinase of Citrifermentans bemidjiense (strain ATCC BAA-1014 / DSM 16622 / JCM 12645 / Bem) (Geobacter bemidjiensis).